The primary structure comprises 572 residues: Urease subunit alpha (572 aa).

The Urease domain maps to 136 to 572 (GGIDTHIHWI…VPLAQRYFLF (437 aa)). 3 residues coordinate Ni(2+): His-141, His-143, and Lys-224. An N6-carboxylysine modification is found at Lys-224. His-226 lines the substrate pocket. The Ni(2+) site is built by His-253 and His-279. The active-site Proton donor is the His-327. Residue Asp-367 participates in Ni(2+) binding.

This sequence belongs to the metallo-dependent hydrolases superfamily. Urease alpha subunit family. As to quaternary structure, heterotrimer of UreA (gamma), UreB (beta) and UreC (alpha) subunits. Three heterotrimers associate to form the active enzyme. The cofactor is Ni cation. Carboxylation allows a single lysine to coordinate two nickel ions.

The protein localises to the cytoplasm. The catalysed reaction is urea + 2 H2O + H(+) = hydrogencarbonate + 2 NH4(+). It functions in the pathway nitrogen metabolism; urea degradation; CO(2) and NH(3) from urea (urease route): step 1/1. The protein is Urease subunit alpha of Actinobacillus pleuropneumoniae serotype 5b (strain L20).